A 241-amino-acid chain; its full sequence is Large ribosomal subunit protein uL1 (241 aa).

It belongs to the universal ribosomal protein uL1 family. As to quaternary structure, part of the 50S ribosomal subunit.

Binds directly to 23S rRNA. The L1 stalk is quite mobile in the ribosome, and is involved in E site tRNA release. Its function is as follows. Protein L1 is also a translational repressor protein, it controls the translation of the L11 operon by binding to its mRNA. The chain is Large ribosomal subunit protein uL1 from Thermomicrobium roseum (strain ATCC 27502 / DSM 5159 / P-2).